The sequence spans 336 residues: MAKVYYEKDVTVNVLKEKKVAIIGYGSQGHAHAQNLRDNGFDVVVGLRKGKSWDKAKEDGFSVYTVAEAAKQADVVMILLPDELQPEVYEAEIAPNLQAGNSLVFAHGFNVHFDQVKPPANVDVFLVAPKGPGHLVRRTFSEGGAVPALFAVYQDATGVATEKALSYADGIGATRAGVLETTFKEETETDLFGEQAVLCGGVTALVKAGFETLVDAGYQPELAYFECLHELKLIVDLMYEGGLENMRYSVSDTAQWGDFVSGPRVVTEDTKKAMGTVLAEIQDGTFARGWIAEHKAGRPNFHATNEKENEHEIEVVGRKLREMMPFVQPRVKVGMK.

The KARI N-terminal Rossmann domain maps to Ala2–Thr181. Residues Tyr25 to Gln28, Arg48, Ser52, and Asp82 to Gln85 each bind NADP(+). His107 is an active-site residue. Gly133 is a binding site for NADP(+). The KARI C-terminal knotted domain occupies Thr182–Val327. 4 residues coordinate Mg(2+): Asp190, Glu194, Glu226, and Glu230. A substrate-binding site is contributed by Ser251.

This sequence belongs to the ketol-acid reductoisomerase family. Requires Mg(2+) as cofactor.

It catalyses the reaction (2R)-2,3-dihydroxy-3-methylbutanoate + NADP(+) = (2S)-2-acetolactate + NADPH + H(+). The catalysed reaction is (2R,3R)-2,3-dihydroxy-3-methylpentanoate + NADP(+) = (S)-2-ethyl-2-hydroxy-3-oxobutanoate + NADPH + H(+). It participates in amino-acid biosynthesis; L-isoleucine biosynthesis; L-isoleucine from 2-oxobutanoate: step 2/4. It functions in the pathway amino-acid biosynthesis; L-valine biosynthesis; L-valine from pyruvate: step 2/4. In terms of biological role, involved in the biosynthesis of branched-chain amino acids (BCAA). Catalyzes an alkyl-migration followed by a ketol-acid reduction of (S)-2-acetolactate (S2AL) to yield (R)-2,3-dihydroxy-isovalerate. In the isomerase reaction, S2AL is rearranged via a Mg-dependent methyl migration to produce 3-hydroxy-3-methyl-2-ketobutyrate (HMKB). In the reductase reaction, this 2-ketoacid undergoes a metal-dependent reduction by NADPH to yield (R)-2,3-dihydroxy-isovalerate. The sequence is that of Ketol-acid reductoisomerase (NADP(+)) 1 from Bacillus cereus (strain ATCC 10987 / NRS 248).